Reading from the N-terminus, the 948-residue chain is Bifunctional uridylyltransferase/uridylyl-removing enzyme (948 aa).

A uridylyltransferase region spans residues 1-372 (METHHIDFST…RFANRSRKIP (372 aa)). The uridylyl-removing stretch occupies residues 373–728 (GTVEFVEDRG…VRTDSFHAIT (356 aa)). The 117-residue stretch at 489-605 (VDEHLIRAVE…IDFADRVQSL (117 aa)) folds into the HD domain. 2 ACT domains span residues 729-810 (EITV…EVIA) and 840-921 (VIEV…ERMP).

The protein belongs to the GlnD family. Requires Mg(2+) as cofactor.

The catalysed reaction is [protein-PII]-L-tyrosine + UTP = [protein-PII]-uridylyl-L-tyrosine + diphosphate. It catalyses the reaction [protein-PII]-uridylyl-L-tyrosine + H2O = [protein-PII]-L-tyrosine + UMP + H(+). Its activity is regulated as follows. Uridylyltransferase (UTase) activity is inhibited by glutamine, while glutamine activates uridylyl-removing (UR) activity. In terms of biological role, modifies, by uridylylation and deuridylylation, the PII regulatory proteins (GlnB and homologs), in response to the nitrogen status of the cell that GlnD senses through the glutamine level. Under low glutamine levels, catalyzes the conversion of the PII proteins and UTP to PII-UMP and PPi, while under higher glutamine levels, GlnD hydrolyzes PII-UMP to PII and UMP (deuridylylation). Thus, controls uridylylation state and activity of the PII proteins, and plays an important role in the regulation of nitrogen fixation and metabolism. The protein is Bifunctional uridylyltransferase/uridylyl-removing enzyme of Rhizobium tropici.